The following is a 390-amino-acid chain: Dual-specificity RNA methyltransferase RlmN (390 aa).

Catalysis depends on E126, which acts as the Proton acceptor. Residues 134–374 (TEDRGAVCLS…APVRTPRGQD (241 aa)) enclose the Radical SAM core domain. A disulfide bond links C141 and C379. [4Fe-4S] cluster is bound by residues C148, C152, and C155. Residues 205–206 (GE), S237, 259–261 (SLH), and N336 contribute to the S-adenosyl-L-methionine site. The S-methylcysteine intermediate role is filled by C379.

Belongs to the radical SAM superfamily. RlmN family. [4Fe-4S] cluster serves as cofactor.

Its subcellular location is the cytoplasm. It carries out the reaction adenosine(2503) in 23S rRNA + 2 reduced [2Fe-2S]-[ferredoxin] + 2 S-adenosyl-L-methionine = 2-methyladenosine(2503) in 23S rRNA + 5'-deoxyadenosine + L-methionine + 2 oxidized [2Fe-2S]-[ferredoxin] + S-adenosyl-L-homocysteine. The catalysed reaction is adenosine(37) in tRNA + 2 reduced [2Fe-2S]-[ferredoxin] + 2 S-adenosyl-L-methionine = 2-methyladenosine(37) in tRNA + 5'-deoxyadenosine + L-methionine + 2 oxidized [2Fe-2S]-[ferredoxin] + S-adenosyl-L-homocysteine. Its function is as follows. Specifically methylates position 2 of adenine 2503 in 23S rRNA and position 2 of adenine 37 in tRNAs. m2A2503 modification seems to play a crucial role in the proofreading step occurring at the peptidyl transferase center and thus would serve to optimize ribosomal fidelity. The polypeptide is Dual-specificity RNA methyltransferase RlmN (Acidiphilium cryptum (strain JF-5)).